A 102-amino-acid polypeptide reads, in one-letter code: Small ribosomal subunit protein uS10 (102 aa).

Belongs to the universal ribosomal protein uS10 family. Part of the 30S ribosomal subunit.

Functionally, involved in the binding of tRNA to the ribosomes. This is Small ribosomal subunit protein uS10 from Pyrococcus horikoshii (strain ATCC 700860 / DSM 12428 / JCM 9974 / NBRC 100139 / OT-3).